The primary structure comprises 432 residues: uncharacterized protein (432 aa).

This sequence to M.jannaschii MJ0977.

This is an uncharacterized protein from Methanocaldococcus jannaschii (strain ATCC 43067 / DSM 2661 / JAL-1 / JCM 10045 / NBRC 100440) (Methanococcus jannaschii).